A 385-amino-acid chain; its full sequence is tRNA-specific 2-thiouridylase MnmA (385 aa).

ATP-binding positions include alanine 18–serine 25 and leucine 44. Residue cysteine 112 is the Nucleophile of the active site. Cysteine 112 and cysteine 209 form a disulfide bridge. Glycine 136 lines the ATP pocket. Residues arginine 159–glutamine 161 form an interaction with tRNA region. Catalysis depends on cysteine 209, which acts as the Cysteine persulfide intermediate.

This sequence belongs to the MnmA/TRMU family.

It localises to the cytoplasm. It carries out the reaction S-sulfanyl-L-cysteinyl-[protein] + uridine(34) in tRNA + AH2 + ATP = 2-thiouridine(34) in tRNA + L-cysteinyl-[protein] + A + AMP + diphosphate + H(+). Functionally, catalyzes the 2-thiolation of uridine at the wobble position (U34) of tRNA, leading to the formation of s(2)U34. This Methylorubrum populi (strain ATCC BAA-705 / NCIMB 13946 / BJ001) (Methylobacterium populi) protein is tRNA-specific 2-thiouridylase MnmA.